The following is a 171-amino-acid chain: Small ribosomal subunit protein uS5 (171 aa).

The 64-residue stretch at 15-78 (YEEKVVKIKR…EKAKKQLIRI (64 aa)) folds into the S5 DRBM domain.

It belongs to the universal ribosomal protein uS5 family. Part of the 30S ribosomal subunit. Contacts proteins S4 and S8.

Functionally, with S4 and S12 plays an important role in translational accuracy. In terms of biological role, located at the back of the 30S subunit body where it stabilizes the conformation of the head with respect to the body. The polypeptide is Small ribosomal subunit protein uS5 (Phytoplasma australiense).